We begin with the raw amino-acid sequence, 110 residues long: Cytochrome c (110 aa).

Heme c contacts are provided by C21, C24, H25, and M87.

It belongs to the cytochrome c family. Binds 1 heme c group covalently per subunit.

The protein localises to the mitochondrion intermembrane space. Electron carrier protein. The oxidized form of the cytochrome c heme group can accept an electron from the heme group of the cytochrome c1 subunit of cytochrome reductase. Cytochrome c then transfers this electron to the cytochrome oxidase complex, the final protein carrier in the mitochondrial electron-transport chain. The protein is Cytochrome c (CYCK) of Kluyveromyces lactis (strain ATCC 8585 / CBS 2359 / DSM 70799 / NBRC 1267 / NRRL Y-1140 / WM37) (Yeast).